A 212-amino-acid polypeptide reads, in one-letter code: Large ribosomal subunit protein uL3 (212 aa).

The tract at residues 136–155 is disordered; that stretch reads THGNSLSHRSNGSIGQNQTP. Gln-153 carries the post-translational modification N5-methylglutamine.

Belongs to the universal ribosomal protein uL3 family. Part of the 50S ribosomal subunit. Forms a cluster with proteins L14 and L19. In terms of processing, methylated by PrmB.

Its function is as follows. One of the primary rRNA binding proteins, it binds directly near the 3'-end of the 23S rRNA, where it nucleates assembly of the 50S subunit. The chain is Large ribosomal subunit protein uL3 from Shewanella oneidensis (strain ATCC 700550 / JCM 31522 / CIP 106686 / LMG 19005 / NCIMB 14063 / MR-1).